We begin with the raw amino-acid sequence, 67 residues long: Large ribosomal subunit protein bL35 (67 aa).

Belongs to the bacterial ribosomal protein bL35 family.

The polypeptide is Large ribosomal subunit protein bL35 (Paramagnetospirillum magneticum (strain ATCC 700264 / AMB-1) (Magnetospirillum magneticum)).